The chain runs to 513 residues: cAMP-regulated M3R protein (513 aa).

This sequence to D.discoideum protein M3L.

The sequence is that of cAMP-regulated M3R protein (prtB) from Dictyostelium discoideum (Social amoeba).